A 136-amino-acid chain; its full sequence is Phospholipase A2 (136 aa).

Positions 8, 10, and 12 each coordinate Ca(2+). Disulfide bonds link C9/C31, C30/C70, C37/C63, C61/C95, and C105/C117. Residue N16 is glycosylated (N-linked (GlcNAc...) asparagine). H34 is a catalytic residue. D35 lines the Ca(2+) pocket. D64 is a catalytic residue.

The protein belongs to the phospholipase A2 family. The cofactor is Ca(2+). In terms of tissue distribution, expressed by the venom gland.

It is found in the secreted. It catalyses the reaction a 1,2-diacyl-sn-glycero-3-phosphocholine + H2O = a 1-acyl-sn-glycero-3-phosphocholine + a fatty acid + H(+). Functionally, PLA2 catalyzes the calcium-dependent hydrolysis of the 2-acyl groups in 3-sn-phosphoglycerides. The sequence is that of Phospholipase A2 from Bombus terrestris (Buff-tailed bumblebee).